The chain runs to 224 residues: Transposase for insertion sequence element IS257 in transposon Tn4003 (224 aa).

The H-T-H motif DNA-binding region spans 33–52 (EILRGRGVNVHHSTVYRWVQ). Positions 73-222 (WRIDETYIKI…SPCHEISIML (150 aa)) constitute an Integrase catalytic domain.

Its function is as follows. Involved in the transposition of the insertion sequence. The protein is Transposase for insertion sequence element IS257 in transposon Tn4003 of Staphylococcus aureus.